The sequence spans 291 residues: Mitochondrial citrate transporter B (291 aa).

3 Solcar repeats span residues 10–97 (PQKW…IKNS), 105–193 (LSPA…LKES), and 201–283 (PTLF…MTYL). 6 helical membrane passes run 16 to 36 (LIAGGVAGGVEAASTYPFEYA), 74 to 94 (STLIIGTTAKAAVRFVSYDTI), 112 to 132 (VAGVVAGATESVLAVTPTERI), 172 to 192 (TTLKQSATSAVRMGTYNILKE), 203 to 220 (LFTTFCMGALAGVVTVYA), and 255 to 276 (FWKGSSMRLGRLLLSGGIVFSV).

The protein belongs to the mitochondrial carrier (TC 2.A.29) family.

It localises to the mitochondrion inner membrane. It catalyses the reaction citrate(in) + H(+)(in) = citrate(out) + H(+)(out). In terms of biological role, mitochondrial transporter that mediates citrate export from mitochondria to cytoplasm. Both ctpA, ctpB, and ctpD play important roles in citric acid transport across the mitochondrial membrane and function in a redundant manner. The chain is Mitochondrial citrate transporter B from Aspergillus niger (strain ATCC 1015 / CBS 113.46 / FGSC A1144 / LSHB Ac4 / NCTC 3858a / NRRL 328 / USDA 3528.7).